The following is a 241-amino-acid chain: DNA repair protein RecO (241 aa).

The protein belongs to the RecO family.

In terms of biological role, involved in DNA repair and RecF pathway recombination. This chain is DNA repair protein RecO, found in Yersinia pseudotuberculosis serotype O:1b (strain IP 31758).